Here is a 496-residue protein sequence, read N- to C-terminus: Probable cytosol aminopeptidase (496 aa).

Residues Lys266 and Asp271 each contribute to the Mn(2+) site. Lys278 is a catalytic residue. Mn(2+) contacts are provided by Asp289, Asp348, and Glu350. Arg352 is a catalytic residue.

It belongs to the peptidase M17 family. It depends on Mn(2+) as a cofactor.

The protein resides in the cytoplasm. It carries out the reaction Release of an N-terminal amino acid, Xaa-|-Yaa-, in which Xaa is preferably Leu, but may be other amino acids including Pro although not Arg or Lys, and Yaa may be Pro. Amino acid amides and methyl esters are also readily hydrolyzed, but rates on arylamides are exceedingly low.. The enzyme catalyses Release of an N-terminal amino acid, preferentially leucine, but not glutamic or aspartic acids.. Its function is as follows. Presumably involved in the processing and regular turnover of intracellular proteins. Catalyzes the removal of unsubstituted N-terminal amino acids from various peptides. The protein is Probable cytosol aminopeptidase of Azotobacter vinelandii (strain DJ / ATCC BAA-1303).